A 46-amino-acid chain; its full sequence is Protein krueppel (46 aa).

C2H2-type zinc fingers lie at residues 1-4, 10-32, and 38-46; these read MRLH, YQCLHCDRHFVQVANLRRHLRVH, and YACEICPSR.

Belongs to the krueppel C2H2-type zinc-finger protein family.

The protein resides in the nucleus. Functionally, krueppel is a gap class segmentation protein. The sequence is that of Protein krueppel (Kr) from Pholcus phalangioides (Longbodied cellar spider).